The following is a 256-amino-acid chain: Non-structural protein 1 (256 aa).

It localises to the host cytoplasm. The protein localises to the host perinuclear region. In terms of biological role, plays a role in inhibition of the host innate immune system by counteracting the type I interferon signaling. The protein is Non-structural protein 1 of Infectious salmon anemia virus (isolate Atlantic salmon/Norway/810/9/99) (ISAV).